Consider the following 307-residue polypeptide: 4-diphosphocytidyl-2-C-methyl-D-erythritol kinase (307 aa).

Lysine 14 is a catalytic residue. 107 to 117 contributes to the ATP binding site; the sequence is PVAGGMAGGSA. Aspartate 149 is an active-site residue.

It belongs to the GHMP kinase family. IspE subfamily.

The catalysed reaction is 4-CDP-2-C-methyl-D-erythritol + ATP = 4-CDP-2-C-methyl-D-erythritol 2-phosphate + ADP + H(+). It functions in the pathway isoprenoid biosynthesis; isopentenyl diphosphate biosynthesis via DXP pathway; isopentenyl diphosphate from 1-deoxy-D-xylulose 5-phosphate: step 3/6. Its function is as follows. Catalyzes the phosphorylation of the position 2 hydroxy group of 4-diphosphocytidyl-2C-methyl-D-erythritol. The chain is 4-diphosphocytidyl-2-C-methyl-D-erythritol kinase from Thermobifida fusca (strain YX).